The following is a 404-amino-acid chain: Dual-specificity RNA methyltransferase RlmN (404 aa).

Glutamate 119 serves as the catalytic Proton acceptor. One can recognise a Radical SAM core domain in the interval 126-358 (VGRAGALCVS…NKAGYSSPIR (233 aa)). Cysteine 133 and cysteine 369 form a disulfide bridge. Positions 140, 144, and 147 each coordinate [4Fe-4S] cluster. Residues 195–196 (GE), serine 227, 249–251 (SLH), and asparagine 326 each bind S-adenosyl-L-methionine. The active-site S-methylcysteine intermediate is cysteine 369.

This sequence belongs to the radical SAM superfamily. RlmN family. Requires [4Fe-4S] cluster as cofactor.

The protein localises to the cytoplasm. It catalyses the reaction adenosine(2503) in 23S rRNA + 2 reduced [2Fe-2S]-[ferredoxin] + 2 S-adenosyl-L-methionine = 2-methyladenosine(2503) in 23S rRNA + 5'-deoxyadenosine + L-methionine + 2 oxidized [2Fe-2S]-[ferredoxin] + S-adenosyl-L-homocysteine. The catalysed reaction is adenosine(37) in tRNA + 2 reduced [2Fe-2S]-[ferredoxin] + 2 S-adenosyl-L-methionine = 2-methyladenosine(37) in tRNA + 5'-deoxyadenosine + L-methionine + 2 oxidized [2Fe-2S]-[ferredoxin] + S-adenosyl-L-homocysteine. Functionally, specifically methylates position 2 of adenine 2503 in 23S rRNA and position 2 of adenine 37 in tRNAs. m2A2503 modification seems to play a crucial role in the proofreading step occurring at the peptidyl transferase center and thus would serve to optimize ribosomal fidelity. In Caulobacter sp. (strain K31), this protein is Dual-specificity RNA methyltransferase RlmN.